Reading from the N-terminus, the 38-residue chain is MKVRASVKKMCEKCRVIRRHGRVMVICTATQKHKQRQG.

The protein belongs to the bacterial ribosomal protein bL36 family.

The polypeptide is Large ribosomal subunit protein bL36 (Prochlorococcus marinus (strain SARG / CCMP1375 / SS120)).